We begin with the raw amino-acid sequence, 363 residues long: MASAVVSMVPTTASRFALLQVDSSSDSDSEKARGAHATGKARSGSAAKGKSKGNEKKKEKRRKKKEQQQSEANELRNLAFKKIPSKPSQGIGGALQEHSTHNVPKEYQEDDWQQWQQRDEQLTSDMFEADLEKALMLSKLEYEESKDNGNEVNGVPQSKKVNKKDKRRNNQGKDKPLTVPLKDFQLEDQQAKKQEELKSPAMPQDRGFFNKLEEDVTKIILKEKRKEHSSDVTESFSTPDYSMEPALKDGKTEVLKQEIEKKEAELKQMKSIISQWEAKYREVKARNSQLLKMLQEGEMKDKAEILLQVDELLSIKNELTLQVTTLHAALEQERSKVKVLQAEQVKYQGGKKSKKNPESEHGR.

2 disordered regions span residues 22-124 (DSSS…QLTS) and 143-185 (EESK…KDFQ). Positions 54 to 79 (NEKKKEKRRKKKEQQQSEANELRNLA) form a coiled coil. The segment covering 98–107 (HSTHNVPKEY) has biased composition (basic and acidic residues). Positions 160–170 (KVNKKDKRRNN) are enriched in basic residues. Coiled-coil stretches lie at residues 247–298 (LKDG…QEGE) and 328–348 (AALE…VKYQ).

Belongs to the GKAP1 family.

The protein localises to the golgi apparatus. Its function is as follows. May play a role in the regulation of insulin-dependent IRS1 tyrosine phosphorylation in adipocytes. This is G kinase-anchoring protein 1 (gkap1) from Xenopus tropicalis (Western clawed frog).